Reading from the N-terminus, the 800-residue chain is Calmodulin-sensitive adenylate cyclase (800 aa).

An N-terminal signal peptide occupies residues 1–33 (MTRNKFIPNKFSIISFSVLLFAISSSQAIEVNA). An ATLF-like domain is found at 60–273 (KDSINNLVKT…MFEYMNKLEK (214 aa)). Residues 294–349 (DVLKGEKALKASGLVPEHADAFKKIARELNTYILFRPVNKLATNLIKSGVATKGLN) form a catalytic CA1 region. The tract at residues 350-489 (VHGKSSDWGP…NVEGVLKPLT (140 aa)) is catalytic CB. The active-site Proton acceptor is His-351. The segment at 490 to 622 (ADYDLFALAP…RFIEKNITGK (133 aa)) is catalytic CA2. 2 residues coordinate Mg(2+): Asp-491 and Asp-493. 3',5'-cyclic AMP is bound by residues Thr-548 and 577–579 (HGT). His-577 contacts Mg(2+). The interaction with calmodulin stretch occupies residues 623 to 800 (DYLYYFNRSY…EVFQKIIDEK (178 aa)).

It belongs to the adenylyl cyclase class-2 family. Interacts (via ATLF domain) with the cleaved form of protective antigen (PA-63) anthrax toxin; interaction is required for EF translocation into the host cytoplasm. Ca(2+) serves as cofactor.

The protein localises to the secreted. The protein resides in the host cytoplasm. Its subcellular location is the host cytosol. It carries out the reaction ATP = 3',5'-cyclic AMP + diphosphate. Its activity is regulated as follows. Host calmodulin is an absolute requirement for its activation. Inhibited by ethyl 5-aminopyrazolo[1,5-a]quinazoline-3-carboxylate. Edema factor (EF), which constitutes one of the three proteins composing the anthrax toxin, causes edema in the host. Acts as a calmodulin-dependent adenylyl cyclase by converting ATP to cAMP, leading to dramatic elevation of intracellular cAMP levels in the host, thereby causing edema. EF is not toxic by itself and only acts as an edema factor when associated with protective antigen (PA) to form the edema toxin (EdTx). Required for the survival of germinated spores within macrophages at the early stages of infection. The chain is Calmodulin-sensitive adenylate cyclase (cya) from Bacillus anthracis.